Here is a 412-residue protein sequence, read N- to C-terminus: Sterol-4-alpha-carboxylate 3-dehydrogenase erg26, decarboxylating (412 aa).

NADP(+)-binding positions include 17 to 23 (GGCGFLG), 89 to 90 (DI), and 111 to 113 (TAT). Substrate is bound by residues S158 and Y188. Residues Y188, K192, and 217-220 (PAGI) contribute to the NADP(+) site. The Proton donor role is filled by K192.

The protein belongs to the 3-beta-HSD family. In terms of assembly, heterotetramer of erg25, erg26, erg27 and erg28. Erg28 acts as a scaffold to tether erg27 and other 4,4-demethylation-related enzymes, forming a demethylation enzyme complex, in the endoplasmic reticulum.

The protein localises to the endoplasmic reticulum membrane. Its pathway is steroid metabolism; ergosterol biosynthesis. In terms of biological role, sterol-C4-methyl oxidase; part of the third module of ergosterol biosynthesis pathway that includes the late steps of the pathway. Erg26 is a catalytic component of the C-4 demethylation complex that catalyzes the conversion of 4,4-dimethylfecosterol into fecosterol via 4-methylfecosterol. The third module or late pathway involves the ergosterol synthesis itself through consecutive reactions that mainly occur in the endoplasmic reticulum (ER) membrane. Firstly, the squalene synthase erg9 catalyzes the condensation of 2 farnesyl pyrophosphate moieties to form squalene, which is the precursor of all steroids. Squalene synthase is crucial for balancing the incorporation of farnesyl diphosphate (FPP) into sterol and nonsterol isoprene synthesis. Secondly, squalene is converted into lanosterol by the consecutive action of the squalene epoxidase erg1 and the lanosterol synthase erg7. Then, the delta(24)-sterol C-methyltransferase erg6 methylates lanosterol at C-24 to produce eburicol. Eburicol is the substrate of the sterol 14-alpha demethylase encoded by cyp51A and cyp51B, to yield 4,4,24-trimethyl ergosta-8,14,24(28)-trienol. The C-14 reductase erg24 then reduces the C14=C15 double bond which leads to 4,4-dimethylfecosterol. A sequence of further demethylations at C-4, involving the C-4 demethylation complex containing the C-4 methylsterol oxidases erg25A or erg25B, the sterol-4-alpha-carboxylate 3-dehydrogenase erg26 and the 3-keto-steroid reductase erg27, leads to the production of fecosterol via 4-methylfecosterol. The C-8 sterol isomerase erg2 then catalyzes the reaction which results in unsaturation at C-7 in the B ring of sterols and thus converts fecosterol to episterol. The sterol-C5-desaturase erg3B then catalyzes the introduction of a C-5 double bond in the B ring to produce 5-dehydroepisterol. The 2 other sterol-C5-desaturases, erg3A and erg3C, seem to be less important in ergosterol biosynthesis. The C-22 sterol desaturase erg5 further converts 5-dehydroepisterol into ergosta-5,7,22,24(28)-tetraen-3beta-ol by forming the C-22(23) double bond in the sterol side chain. Finally, ergosta-5,7,22,24(28)-tetraen-3beta-ol is substrate of the C-24(28) sterol reductases erg4A and erg4B to produce ergosterol. Possible alternative sterol biosynthetic pathways might exist from fecosterol to ergosterol, depending on the activities of the erg3 isoforms. The protein is Sterol-4-alpha-carboxylate 3-dehydrogenase erg26, decarboxylating of Aspergillus fumigatus (strain ATCC MYA-4609 / CBS 101355 / FGSC A1100 / Af293) (Neosartorya fumigata).